A 309-amino-acid polypeptide reads, in one-letter code: Porphobilinogen deaminase (309 aa).

C242 is modified (S-(dipyrrolylmethanemethyl)cysteine).

Belongs to the HMBS family. In terms of assembly, monomer. Requires dipyrromethane as cofactor.

The catalysed reaction is 4 porphobilinogen + H2O = hydroxymethylbilane + 4 NH4(+). Its pathway is porphyrin-containing compound metabolism; protoporphyrin-IX biosynthesis; coproporphyrinogen-III from 5-aminolevulinate: step 2/4. Its function is as follows. Tetrapolymerization of the monopyrrole PBG into the hydroxymethylbilane pre-uroporphyrinogen in several discrete steps. The protein is Porphobilinogen deaminase of Shewanella sediminis (strain HAW-EB3).